The chain runs to 580 residues: Rap guanine nucleotide exchange factor 5 (580 aa).

The 134-residue stretch at 68–201 (DRYVVVSGTP…ELKEFQKILG (134 aa)) folds into the N-terminal Ras-GEF domain. Residues 345-579 (NTWDLALELM…FELSHRIEPR (235 aa)) form the Ras-GEF domain.

Widely expressed with highest levels in brain.

The protein localises to the nucleus. In terms of biological role, guanine nucleotide exchange factor (GEF) for RAP1A, RAP2A and MRAS/M-Ras-GTP. Its association with MRAS inhibits Rap1 activation. The chain is Rap guanine nucleotide exchange factor 5 (RAPGEF5) from Homo sapiens (Human).